Reading from the N-terminus, the 772-residue chain is U3 small nucleolar RNA-associated protein 25 homolog (772 aa).

The disordered stretch occupies residues 1–179; the sequence is MGKRRNRGRS…SEEFTDVKHE (179 aa). Promotes p53/TP53 degradation regions lie at residues 1–201 and 589–651; these read MGKR…SQRP and VQLP…KKEE. Ser-10 is subject to Phosphoserine. Residues 25–43 show a composition bias toward basic and acidic residues; that stretch reads RDFGEEHPFYDRVSKKEAK. Phosphoserine is present on residues Ser-52, Ser-60, and Ser-64. Over residues 54-70 the composition is skewed to basic and acidic residues; that stretch reads DSSHSESESESEQEHVS. Residues 84–124 are compositionally biased toward acidic residues; the sequence is EEEEEEEEEEEEEEEEEEEEEEEEEDDSAVGDAEMNEEAGS. The span at 127–136 shows a compositional bias: low complexity; that stretch reads GSVGEAAVSE. Basic and acidic residues predominate over residues 169-179; sequence SSEEFTDVKHE. Residues 652–713 are represses p53/TP53 degradation; sequence LNFTHICEYT…YELPTYPHFY (62 aa).

The protein belongs to the UTP25 family. Interacts with CAPN3; the interaction is required for CAPN3 translocation to the nucleolus. Post-translationally, phosphorylated. Phosphorylation is required to promote p53/TP53 degradation in the nucleolus which promotes cell cycle progression and liver development. As to expression, expressed in all tissues tested: brain, small intestine, large intestine, stomach, liver, spleen, thymus, lung, kidney and testes (at protein level).

It is found in the nucleus. Its subcellular location is the nucleolus. Its function is as follows. Component of the ribosomal small subunit processome for the biogenesis of ribosomes, functions in pre-ribosomal RNA (pre-rRNA) processing. Essential for embryonic development in part through the regulation of p53 pathway. Controls the expansion growth of digestive organs and liver. Also involved in the sympathetic neuronal development. Mediates, with CAPN3, the proteasome-independent degradation of p53/TP53. The polypeptide is U3 small nucleolar RNA-associated protein 25 homolog (Mus musculus (Mouse)).